A 264-amino-acid chain; its full sequence is Proliferating cell nuclear antigen 2 (264 aa).

Belongs to the PCNA family. Homotrimer. Oligomer. Interacts with ORC1 (via PIP-box motif). Interacts with FEN1.

Its subcellular location is the nucleus. The protein resides in the chromosome. It is found in the cytoplasm. In terms of biological role, may be involved in DNA damage response. Appears not to be involved in DNA replication in trophozoites. The protein is Proliferating cell nuclear antigen 2 of Plasmodium falciparum (isolate 3D7).